A 21-amino-acid polypeptide reads, in one-letter code: GLLSKVLGVGKKVLCGVSGLC.

The cysteines at positions 15 and 21 are disulfide-linked.

Expressed by the skin dorsal glands.

The protein localises to the secreted. In terms of biological role, thanks to its single linear amphipathic alpha-helix, may integrate into membrane phospholipids, leading to lysis of the membrane. Shows antibacterial activity against both Gram-positive and Gram-negative bacteria and against the fungus C.albicans. Has no hemolytic activity. This is Nigrocin-2 from Pelophylax nigromaculatus (Black-spotted frog).